A 357-amino-acid chain; its full sequence is 4-hydroxymandelate oxidase (357 aa).

The 357-residue stretch at 1 to 357 folds into the FMN hydroxy acid dehydrogenase domain; that stretch reads MTYVSLADLE…RRLNTKLGVV (357 aa). Gln-126 contributes to the FMN binding site. Residue Tyr-128 participates in a 2-oxocarboxylate binding. Residue Thr-154 coordinates FMN. Arg-163 provides a ligand contact to a 2-oxocarboxylate. Lys-228 provides a ligand contact to FMN. His-252 serves as the catalytic Proton acceptor. Residue Arg-255 coordinates a 2-oxocarboxylate. FMN is bound by residues 283-287 and 306-307; these read DGGIR and GR.

This sequence belongs to the FMN-dependent alpha-hydroxy acid dehydrogenase family. It depends on FMN as a cofactor.

The catalysed reaction is (S)-4-hydroxymandelate + O2 = 4-hydroxyphenylglyoxylate + H2O2. Its pathway is antibiotic biosynthesis; vancomycin biosynthesis. In terms of biological role, catalyzes the oxidation of p-hydroxymandelate to p-hydroxybenzoylformate in the biosynthesis of L-(4-hydroxyphenyl)glycine and L-(3,5-dihydroxyphenyl)glycine, 2 non-proteinogenic amino acids occurring in the vancomycin group of antibiotics. This Amycolatopsis orientalis (Nocardia orientalis) protein is 4-hydroxymandelate oxidase (hmo).